Here is a 383-residue protein sequence, read N- to C-terminus: Heme A synthase (383 aa).

The next 8 helical transmembrane spans lie at 38 to 58, 127 to 147, 153 to 173, 187 to 207, 230 to 250, 287 to 307, 321 to 341, and 344 to 364; these read VRVWLMMLFGLVVIMIAVGGL, VIGLVWALGFFGFLVTRKIPP, LFLLGVLGGLQGAIGWWMVAS, LATHLGLAFFILGLIAWYIMV, ANWLMGLAAVQILLGALVAGI, LVQFNHRMVGYLLLLVGLYVW, AFDWVAVILFGQMVLGIVTVL, and APWTWAIAHQFGAVVTICLIL. Histidine 292 provides a ligand contact to heme. Histidine 352 lines the heme pocket.

This sequence belongs to the COX15/CtaA family. Type 2 subfamily. As to quaternary structure, interacts with CtaB. Heme b is required as a cofactor.

It localises to the cell membrane. It carries out the reaction Fe(II)-heme o + 2 A + H2O = Fe(II)-heme a + 2 AH2. It functions in the pathway porphyrin-containing compound metabolism; heme A biosynthesis; heme A from heme O: step 1/1. Catalyzes the conversion of heme O to heme A by two successive hydroxylations of the methyl group at C8. The first hydroxylation forms heme I, the second hydroxylation results in an unstable dihydroxymethyl group, which spontaneously dehydrates, resulting in the formyl group of heme A. In Dinoroseobacter shibae (strain DSM 16493 / NCIMB 14021 / DFL 12), this protein is Heme A synthase.